A 695-amino-acid chain; its full sequence is Elongation factor G (695 aa).

A tr-type G domain is found at 8–282 (EKTRNIGIMA…AVLDYLPAPT (275 aa)). GTP-binding positions include 17 to 24 (AHIDAGKT), 81 to 85 (DTPGH), and 135 to 138 (NKMD).

It belongs to the TRAFAC class translation factor GTPase superfamily. Classic translation factor GTPase family. EF-G/EF-2 subfamily.

It localises to the cytoplasm. Functionally, catalyzes the GTP-dependent ribosomal translocation step during translation elongation. During this step, the ribosome changes from the pre-translocational (PRE) to the post-translocational (POST) state as the newly formed A-site-bound peptidyl-tRNA and P-site-bound deacylated tRNA move to the P and E sites, respectively. Catalyzes the coordinated movement of the two tRNA molecules, the mRNA and conformational changes in the ribosome. This chain is Elongation factor G, found in Listeria innocua serovar 6a (strain ATCC BAA-680 / CLIP 11262).